Reading from the N-terminus, the 856-residue chain is Envelope glycoprotein gp160 (856 aa).

A signal peptide spans 1-31 (MKVKGIQGNWQNWWKWGTLILGLVIICSAAE). Over 32-684 (NLWVTVYYGV…ISNWLWYIKI (653 aa)) the chain is Extracellular. Cys-53 and Cys-73 are oxidised to a cystine. Residues Asn-87, Asn-132, Asn-138, Asn-152, Asn-156, Asn-183, and Asn-198 are each glycosylated (N-linked (GlcNAc...) asparagine; by host). 5 disulfide bridges follow: Cys-118-Cys-206, Cys-125-Cys-197, Cys-130-Cys-153, Cys-219-Cys-248, and Cys-229-Cys-240. Residues 130-152 (CHNITIKDNNTNVDTEMKEEIKN) are V1. A V2 region spans residues 153 to 197 (CSYNMTTELRDKQRKIYSLFYRLDIVPIGGNSSNGDSSKYRLINC). Residues Asn-242, Asn-263, Asn-277, Asn-294, Asn-302, Asn-332, Asn-339, Asn-355, and Asn-364 are each glycosylated (N-linked (GlcNAc...) asparagine; by host). The V3 stretch occupies residues 297–330 (CMRPNNNTRKSISIGPGRAFFATGDIIGDIRQAH). Cys-297 and Cys-331 are oxidised to a cystine. The interval 365-375 (SSGGDVEITTH) is CD4-binding loop. Cystine bridges form between Cys-379–Cys-445 and Cys-386–Cys-418. The interval 386–418 (CNTSGLFNGTWLNGTSNNTWKIDTVNDTIILPC) is V4. 9 N-linked (GlcNAc...) asparagine; by host glycosylation sites follow: Asn-387, Asn-393, Asn-398, Asn-402, Asn-411, Asn-448, Asn-461, Asn-462, and Asn-465. V5 regions lie at residues 461 to 471 (NNTSNETFRPG) and 463 to 471 (TSNETFRPG). Residues 512-532 (AIGMGAFFLGFLGAAGSTMGA) form a fusion peptide region. Positions 574–592 (KQLQARILAVERYLKDQQL) are immunosuppression. An intrachain disulfide couples Cys-598 to Cys-604. 3 N-linked (GlcNAc...) asparagine; by host glycosylation sites follow: Asn-611, Asn-616, and Asn-637. Residues 633-667 (KEVSNYTQVIYNLIEESQTQQEINERDLLALDKWA) are a coiled coil. An MPER; binding to GalCer region spans residues 662 to 683 (ALDKWANLWNWFDISNWLWYIK). A helical transmembrane segment spans residues 685 to 705 (FIMIVGGLIGLRIVFAVLSII). Residues 706-856 (NRVRQGYSPL…IRQGLERALL (151 aa)) lie on the Cytoplasmic side of the membrane. A YXXL motif; contains endocytosis signal motif is present at residues 712-715 (YSPL). The tract at residues 720-742 (LTHHQREPDRPERIEEGGGEQDR) is disordered. Residues 723–742 (HQREPDRPERIEEGGGEQDR) show a composition bias toward basic and acidic residues. Cys-764 carries the S-palmitoyl cysteine; by host lipid modification. The short motif at 855–856 (LL) is the Di-leucine internalization motif element.

Belongs to the HIV-1 env protein family. The mature envelope protein (Env) consists of a homotrimer of non-covalently associated gp120-gp41 heterodimers. The resulting complex protrudes from the virus surface as a spike. There seems to be as few as 10 spikes on the average virion. Interacts with host CD4, CCR5 and CXCR4. Gp120 also interacts with the C-type lectins CD209/DC-SIGN and CLEC4M/DC-SIGNR (collectively referred to as DC-SIGN(R)). Gp120 and gp41 interact with GalCer. Gp120 interacts with host ITGA4/ITGB7 complex; on CD4+ T-cells, this interaction results in rapid activation of integrin ITGAL/LFA-1, which facilitates efficient cell-to-cell spreading of HIV-1. Gp120 interacts with cell-associated heparan sulfate; this interaction increases virus infectivity on permissive cells and may be involved in infection of CD4- cells. In terms of assembly, the mature envelope protein (Env) consists of a homotrimer of non-covalently associated gp120-gp41 heterodimers. The resulting complex protrudes from the virus surface as a spike. There seems to be as few as 10 spikes on the average virion. Highly glycosylated by host. The high number of glycan on the protein is reffered to as 'glycan shield' because it contributes to hide protein sequence from adaptive immune system. In terms of processing, palmitoylation of the transmembrane protein and of Env polyprotein (prior to its proteolytic cleavage) is essential for their association with host cell membrane lipid rafts. Palmitoylation is therefore required for envelope trafficking to classical lipid rafts, but not for viral replication. Post-translationally, specific enzymatic cleavages in vivo yield mature proteins. Envelope glycoproteins are synthesized as an inactive precursor that is heavily N-glycosylated and processed likely by host cell furin in the Golgi to yield the mature SU and TM proteins. The cleavage site between SU and TM requires the minimal sequence [KR]-X-[KR]-R. About 2 of the 9 disulfide bonds of gp41 are reduced by P4HB/PDI, following binding to CD4 receptor.

The protein localises to the virion membrane. It localises to the host cell membrane. Its subcellular location is the host endosome membrane. Functionally, oligomerizes in the host endoplasmic reticulum into predominantly trimers. In a second time, gp160 transits in the host Golgi, where glycosylation is completed. The precursor is then proteolytically cleaved in the trans-Golgi and thereby activated by cellular furin or furin-like proteases to produce gp120 and gp41. Attaches the virus to the host lymphoid cell by binding to the primary receptor CD4. This interaction induces a structural rearrangement creating a high affinity binding site for a chemokine coreceptor like CXCR4 and/or CCR5. Acts as a ligand for CD209/DC-SIGN and CLEC4M/DC-SIGNR, which are respectively found on dendritic cells (DCs), and on endothelial cells of liver sinusoids and lymph node sinuses. These interactions allow capture of viral particles at mucosal surfaces by these cells and subsequent transmission to permissive cells. HIV subverts the migration properties of dendritic cells to gain access to CD4+ T-cells in lymph nodes. Virus transmission to permissive T-cells occurs either in trans (without DCs infection, through viral capture and transmission), or in cis (following DCs productive infection, through the usual CD4-gp120 interaction), thereby inducing a robust infection. In trans infection, bound virions remain infectious over days and it is proposed that they are not degraded, but protected in non-lysosomal acidic organelles within the DCs close to the cell membrane thus contributing to the viral infectious potential during DCs' migration from the periphery to the lymphoid tissues. On arrival at lymphoid tissues, intact virions recycle back to DCs' cell surface allowing virus transmission to CD4+ T-cells. Its function is as follows. Acts as a class I viral fusion protein. Under the current model, the protein has at least 3 conformational states: pre-fusion native state, pre-hairpin intermediate state, and post-fusion hairpin state. During fusion of viral and target intracellular membranes, the coiled coil regions (heptad repeats) assume a trimer-of-hairpins structure, positioning the fusion peptide in close proximity to the C-terminal region of the ectodomain. The formation of this structure appears to drive apposition and subsequent fusion of viral and target cell membranes. Complete fusion occurs in host cell endosomes and is dynamin-dependent, however some lipid transfer might occur at the plasma membrane. The virus undergoes clathrin-dependent internalization long before endosomal fusion, thus minimizing the surface exposure of conserved viral epitopes during fusion and reducing the efficacy of inhibitors targeting these epitopes. Membranes fusion leads to delivery of the nucleocapsid into the cytoplasm. This is Envelope glycoprotein gp160 from Homo sapiens (Human).